Here is a 488-residue protein sequence, read N- to C-terminus: Cobyric acid synthase (488 aa).

Residues 248 to 441 (VLRVVVPALP…VHGLFDAPDA (194 aa)) form the GATase cobBQ-type domain. Cys-328 acts as the Nucleophile in catalysis. His-433 is an active-site residue.

Belongs to the CobB/CobQ family. CobQ subfamily.

Its pathway is cofactor biosynthesis; adenosylcobalamin biosynthesis. Functionally, catalyzes amidations at positions B, D, E, and G on adenosylcobyrinic A,C-diamide. NH(2) groups are provided by glutamine, and one molecule of ATP is hydrogenolyzed for each amidation. This chain is Cobyric acid synthase, found in Burkholderia ambifaria (strain ATCC BAA-244 / DSM 16087 / CCUG 44356 / LMG 19182 / AMMD) (Burkholderia cepacia (strain AMMD)).